Consider the following 314-residue polypeptide: Putative S-adenosyl-L-methionine-dependent methyltransferase MAB_3886c (314 aa).

Residues Asp133 and 162-163 (DL) contribute to the S-adenosyl-L-methionine site.

This sequence belongs to the UPF0677 family.

In terms of biological role, exhibits S-adenosyl-L-methionine-dependent methyltransferase activity. In Mycobacteroides abscessus (strain ATCC 19977 / DSM 44196 / CCUG 20993 / CIP 104536 / JCM 13569 / NCTC 13031 / TMC 1543 / L948) (Mycobacterium abscessus), this protein is Putative S-adenosyl-L-methionine-dependent methyltransferase MAB_3886c.